The primary structure comprises 1597 residues: Transmembrane protein 131-like (1597 aa).

The signal sequence occupies residues 1-40; that stretch reads MAGLRRPQSGAYRRTAAAVNLLLGVFQVLLSCCRPGGAQG. The Extracellular portion of the chain corresponds to 41-869; the sequence is QAFEPLPNVV…VVPGPSWEES (829 aa). Residues Asn343, Asn593, Asn709, and Asn846 are each glycosylated (N-linked (GlcNAc...) asparagine). The segment at 696–916 is required for Wnt-signaling inhibition and LRP6 degradation; that stretch reads DYGKVTSLIL…QNGSSSSQQN (221 aa). Residues 870 to 890 form a helical membrane-spanning segment; that stretch reads FWRLTVFFVSLSLLGVILIAF. Topologically, residues 891-1597 are cytoplasmic; it reads QQAQYILMEF…SRDSSYCGNM (707 aa). Positions 907-917 are enriched in low complexity; sequence QNGSSSSQQNG. 3 disordered regions span residues 907–928, 1096–1240, and 1252–1322; these read QNGS…SHPH, AELK…EQRL, and DGAG…SDCD. Basic residues predominate over residues 1213–1222; sequence RPCRRNKKRA. Residues 1223–1239 are compositionally biased toward low complexity; the sequence is SAQASSSPRPSEQSEQR. Basic and acidic residues predominate over residues 1269–1290; the sequence is PERREEDSYYQKSEKKCADKFC. The span at 1291-1319 shows a compositional bias: low complexity; sequence SDSSSDCGSSSGSVRASRGSWGSWSSSSS.

This sequence belongs to the TMEM131 family.

The protein resides in the cell membrane. The protein localises to the endoplasmic reticulum. It is found in the cytoplasm. In terms of biological role, in its membrane-associated form, antagonizes canonical Wnt signaling by triggering lysosome-dependent degradation of Wnt-activated LRP6. Regulates thymocyte proliferation. The protein is Transmembrane protein 131-like of Mus musculus (Mouse).